The following is a 103-amino-acid chain: Large ribosomal subunit protein uL24 (103 aa).

The protein belongs to the universal ribosomal protein uL24 family. Part of the 50S ribosomal subunit.

One of two assembly initiator proteins, it binds directly to the 5'-end of the 23S rRNA, where it nucleates assembly of the 50S subunit. Its function is as follows. One of the proteins that surrounds the polypeptide exit tunnel on the outside of the subunit. The sequence is that of Large ribosomal subunit protein uL24 from Histophilus somni (strain 129Pt) (Haemophilus somnus).